The following is a 146-amino-acid chain: Hemoglobin subunit beta-1 (146 aa).

Positions 2 to 146 (HWTAEEKSAI…VAHALAHRYH (145 aa)) constitute a Globin domain. 2 residues coordinate heme b: His63 and His92.

It belongs to the globin family. Heterotetramer of two alpha chains and two beta chains. As to expression, red blood cells.

Its function is as follows. Involved in oxygen transport from the lung to the various peripheral tissues. This is Hemoglobin subunit beta-1 from Drymarchon melanurus erebennus (Texas indigo snake).